We begin with the raw amino-acid sequence, 214 residues long: Large ribosomal subunit protein uL3 (214 aa).

The residue at position 153 (Q153) is an N5-methylglutamine.

Belongs to the universal ribosomal protein uL3 family. As to quaternary structure, part of the 50S ribosomal subunit. Forms a cluster with proteins L14 and L19. Methylated by PrmB.

One of the primary rRNA binding proteins, it binds directly near the 3'-end of the 23S rRNA, where it nucleates assembly of the 50S subunit. The polypeptide is Large ribosomal subunit protein uL3 (Aromatoleum aromaticum (strain DSM 19018 / LMG 30748 / EbN1) (Azoarcus sp. (strain EbN1))).